The primary structure comprises 203 residues: Microtubule-associated protein Jupiter (203 aa).

A Phosphoserine modification is found at Ser30. A phosphothreonine mark is found at Thr41 and Thr102. Positions Leu123–Lys132 are enriched in polar residues. Disordered stretches follow at residues Leu123–Val163 and Asn182–Trp203. Residues Ser133 to Ser146 show a composition bias toward low complexity. A phosphoserine mark is found at Ser135 and Ser146.

The protein belongs to the MAP Jupiter family.

Its subcellular location is the nucleus. It localises to the cytoplasm. The protein resides in the cytoskeleton. It is found in the spindle. Functionally, binds to all microtubule populations. The chain is Microtubule-associated protein Jupiter from Drosophila mojavensis (Fruit fly).